The primary structure comprises 90 residues: Probable Fe(2+)-trafficking protein (90 aa).

The protein belongs to the Fe(2+)-trafficking protein family.

In terms of biological role, could be a mediator in iron transactions between iron acquisition and iron-requiring processes, such as synthesis and/or repair of Fe-S clusters in biosynthetic enzymes. In Actinobacillus succinogenes (strain ATCC 55618 / DSM 22257 / CCUG 43843 / 130Z), this protein is Probable Fe(2+)-trafficking protein.